We begin with the raw amino-acid sequence, 235 residues long: Probable septum site-determining protein MinC (235 aa).

A disordered region spans residues 104–125; it reads KAVRPAPVEPATPSEPPQNANP. Over residues 110 to 119 the composition is skewed to pro residues; it reads PVEPATPSEP.

It belongs to the MinC family. In terms of assembly, interacts with MinD and FtsZ.

Functionally, cell division inhibitor that blocks the formation of polar Z ring septums. Rapidly oscillates between the poles of the cell to destabilize FtsZ filaments that have formed before they mature into polar Z rings. Prevents FtsZ polymerization. The chain is Probable septum site-determining protein MinC from Salmonella enteritidis PT4 (strain P125109).